Reading from the N-terminus, the 331-residue chain is 6-phosphogluconolactonase (331 aa).

The protein belongs to the cycloisomerase 2 family.

It catalyses the reaction 6-phospho-D-glucono-1,5-lactone + H2O = 6-phospho-D-gluconate + H(+). The protein operates within carbohydrate degradation; pentose phosphate pathway; D-ribulose 5-phosphate from D-glucose 6-phosphate (oxidative stage): step 2/3. Functionally, catalyzes the hydrolysis of 6-phosphogluconolactone to 6-phosphogluconate. This chain is 6-phosphogluconolactonase, found in Enterobacter sp. (strain 638).